A 199-amino-acid chain; its full sequence is Large ribosomal subunit protein bL25 (199 aa).

The protein belongs to the bacterial ribosomal protein bL25 family. CTC subfamily. In terms of assembly, part of the 50S ribosomal subunit; part of the 5S rRNA/L5/L18/L25 subcomplex. Contacts the 5S rRNA. Binds to the 5S rRNA independently of L5 and L18.

In terms of biological role, this is one of the proteins that binds to the 5S RNA in the ribosome where it forms part of the central protuberance. The chain is Large ribosomal subunit protein bL25 from Pelodictyon phaeoclathratiforme (strain DSM 5477 / BU-1).